Reading from the N-terminus, the 765-residue chain is BRCA1-associated RING domain protein 1 (765 aa).

A required for BRCA1 binding region spans residues 20 to 113 (MEPATDGLWA…KLQNLLHDNK (94 aa)). Residues 44–81 (CSRCANILKEPVCLGGCEHIFCSGCISDCVGSGCPVCY) form an RING-type zinc finger. Residue lysine 152 forms a Glycyl lysine isopeptide (Lys-Gly) (interchain with G-Cter in SUMO2) linkage. Disordered stretches follow at residues 183 to 229 (AVPK…EELK), 299 to 328 (KDLR…GSNI), and 369 to 410 (NASD…MPAR). Residues 195 to 204 (SAKKHPKKSV) show a composition bias toward basic residues. Residues 207-229 (INREENLRPETKDSRFDSKEELK) are compositionally biased toward basic and acidic residues. Residues 316–328 (PTTSTSDSCGSNI) are compositionally biased toward polar residues. Serine 378 carries the phosphoserine modification. Threonine 381 carries the post-translational modification Phosphothreonine. The segment covering 391 to 403 (HRQMMSSPSTVKL) has biased composition (polar residues). Lysine 411 participates in a covalent cross-link: Glycyl lysine isopeptide (Lys-Gly) (interchain with G-Cter in SUMO2). 3 ANK repeats span residues 415 to 447 (RGET…VKDH), 448 to 480 (AGWT…TPGY), and 481 to 513 (QNDS…AVNI). The ANK 4; degenerate repeat unit spans residues 514–534 (FGVRPVDYTDNENIRSLLLLP). Positions 542 to 546 (TSQCS) are flexible linker. 2 consecutive BRCT domains span residues 549 to 641 (NTGQ…KYEV) and 655 to 765 (LLPK…PLDS).

As to quaternary structure, homo- and heterodimer. Heterodimer (RING-type zinc finger) with BRCA1. Heterodimer (via ANK repeats and BRCT domains) with CSTF1/CSTF-50. Component of the BRCA1-A complex, at least composed of the BRCA1, BARD1, UIMC1/RAP80, ABRAXAS1, BRCC3/BRCC36, BABAM2 and BABAM1/NBA1. Interacts with UBXN1. Post-translationally, processed during apoptosis. The homodimer is more susceptible to proteolytic cleavage than the BARD1/BRCA1 heterodimer.

It localises to the nucleus. The protein localises to the cytoplasm. It carries out the reaction S-ubiquitinyl-[E2 ubiquitin-conjugating enzyme]-L-cysteine + [acceptor protein]-L-lysine = [E2 ubiquitin-conjugating enzyme]-L-cysteine + N(6)-ubiquitinyl-[acceptor protein]-L-lysine.. The protein operates within protein modification; protein ubiquitination. E3 ubiquitin-protein ligase. The BRCA1-BARD1 heterodimer specifically mediates the formation of 'Lys-6'-linked polyubiquitin chains and coordinates a diverse range of cellular pathways such as DNA damage repair, ubiquitination and transcriptional regulation to maintain genomic stability. Plays a central role in the control of the cell cycle in response to DNA damage. Acts by mediating ubiquitin E3 ligase activity that is required for its tumor suppressor function. Also forms a heterodimer with CSTF1/CSTF-50 to modulate mRNA processing and RNAP II stability by inhibiting pre-mRNA 3' cleavage. This Mus musculus (Mouse) protein is BRCA1-associated RING domain protein 1 (Bard1).